Here is a 486-residue protein sequence, read N- to C-terminus: MAEEYKEALLEKQNYHDGCPGCKVEQMKQLRRGYPYLELSFVWIIVLSTSLPISSLYPFLYYMIEDFGVAKTEKDIGFYAGFVGCSFMLGRALTSVFWGIVADRYGRKPIILLGTISIAIFNALFGLSSNFWMAIGTRFLLGSFNCLLGTMKAYASEIFRDEYQATAMSAVSTAWGIGLIIGPALGGFLAQPADKYPNVFSQESLFGRFRYALPCFTISAFALLVTVLCCFIPETLHNHKLDSLSHDDSYDILEAASHESSPSTGKAGKNERKASQSLLKNWPLMSSIIVYCVLCLHDTAYSEIFALWANSPRKYGGLSYSTNEVGTVLAISGLGLFSFQVFVYPLAEKLLGPVLVTRYAGALMIPIQMSYPFIAGLSGLSLSLMLNCASILINVLSVSAITGLLILQNRAVDQSQRGAANGIAMTAMSLFKTVGPAGAGILFSWSERRLNAAFLPGSHMVFFVLNVIVVVGVALTFKPFLTTSRR.

12 helical membrane-spanning segments follow: residues 41-61, 82-102, 109-129, 131-151, 170-190, 212-232, 288-308, 327-347, 362-384, 391-408, 423-443, and 461-481; these read FVWI…PFLY, FVGC…GIVA, PIIL…GLSS, FWMA…LGTM, AVST…GFLA, ALPC…CCFI, IIVY…FALW, TVLA…YPLA, ALMI…SLSL, ILIN…LILQ, IAMT…GILF, and VFFV…KPFL.

This sequence belongs to the major facilitator superfamily. As to expression, strongly expressed in developing leaves, differentiating zones of root tips and sepals of developing flowers. Restricted to vascular tissues in older leaves, mature roots, flowers, anthers and filaments. Not expressed in developing anthers.

The protein resides in the vacuole membrane. Its function is as follows. Major facilitator superfamily (MFS) transporter involved in zinc tolerance by participating in vacuolar sequestration of zinc. The sequence is that of Protein ZINC INDUCED FACILITATOR 1 (ZIF1) from Arabidopsis thaliana (Mouse-ear cress).